A 144-amino-acid polypeptide reads, in one-letter code: Lysozyme C II (144 aa).

A signal peptide spans 1 to 15; it reads MRAVVVLLLVAVASA. The C-type lysozyme domain maps to 16–144; sequence KVYDRCELAR…LRSYVAGCGV (129 aa). 4 disulfide bridges follow: cysteine 21–cysteine 142, cysteine 45–cysteine 130, cysteine 79–cysteine 95, and cysteine 91–cysteine 109. Residues glutamate 50 and aspartate 67 contribute to the active site.

The protein resides in the secreted. It catalyses the reaction Hydrolysis of (1-&gt;4)-beta-linkages between N-acetylmuramic acid and N-acetyl-D-glucosamine residues in a peptidoglycan and between N-acetyl-D-glucosamine residues in chitodextrins.. Its function is as follows. Lysozymes have primarily a bacteriolytic function; those in tissues and body fluids are associated with the monocyte-macrophage system and enhance the activity of immunoagents. Has antibacterial activity against the Gram positive bacterium P.citreus. Has no antibacterial activity against the Gram negative bacteria E.coli and Y.ruckeri. Does not have hemolytic activity against trout erythrocytes. The sequence is that of Lysozyme C II from Oncorhynchus mykiss (Rainbow trout).